Here is a 622-residue protein sequence, read N- to C-terminus: ATP-dependent lipid A-core flippase (622 aa).

A run of 5 helical transmembrane segments spans residues 32–52, 91–111, 192–212, 286–306, and 312–332; these read IVAA…LAAF, VWGT…LVVI, IVLL…FPLL, SPFS…IALW, and YTTI…YAPI. In terms of domain architecture, ABC transmembrane type-1 spans 33 to 344; the sequence is VAALIAIFGV…LANISIPMQT (312 aa). The region spanning 378-611 is the ABC transporter domain; that stretch reads FRNVDVEYRS…NGYYTMLRNI (234 aa). 410-417 lines the ATP pocket; sequence GRSGSGKS.

It belongs to the ABC transporter superfamily. Lipid exporter (TC 3.A.1.106) family. Homodimer.

The protein resides in the cell inner membrane. The catalysed reaction is ATP + H2O + lipid A-core oligosaccharideSide 1 = ADP + phosphate + lipid A-core oligosaccharideSide 2.. Its function is as follows. Involved in lipopolysaccharide (LPS) biosynthesis. Translocates lipid A-core from the inner to the outer leaflet of the inner membrane. Transmembrane domains (TMD) form a pore in the inner membrane and the ATP-binding domain (NBD) is responsible for energy generation. This Neisseria gonorrhoeae (strain ATCC 700825 / FA 1090) protein is ATP-dependent lipid A-core flippase.